The following is a 31-amino-acid chain: Cytochrome b6-f complex subunit 6 (31 aa).

A helical membrane pass occupies residues 3-23 (TITSYFGFLLAALTITPALFI).

This sequence belongs to the PetL family. In terms of assembly, the 4 large subunits of the cytochrome b6-f complex are cytochrome b6, subunit IV (17 kDa polypeptide, PetD), cytochrome f and the Rieske protein, while the 4 small subunits are PetG, PetL, PetM and PetN. The complex functions as a dimer.

The protein localises to the plastid. Its subcellular location is the chloroplast thylakoid membrane. Component of the cytochrome b6-f complex, which mediates electron transfer between photosystem II (PSII) and photosystem I (PSI), cyclic electron flow around PSI, and state transitions. PetL is important for photoautotrophic growth as well as for electron transfer efficiency and stability of the cytochrome b6-f complex. In Zea mays (Maize), this protein is Cytochrome b6-f complex subunit 6.